We begin with the raw amino-acid sequence, 282 residues long: 2-dehydro-3-deoxyphosphooctonate aldolase (282 aa).

The protein belongs to the KdsA family.

Its subcellular location is the cytoplasm. It carries out the reaction D-arabinose 5-phosphate + phosphoenolpyruvate + H2O = 3-deoxy-alpha-D-manno-2-octulosonate-8-phosphate + phosphate. The protein operates within carbohydrate biosynthesis; 3-deoxy-D-manno-octulosonate biosynthesis; 3-deoxy-D-manno-octulosonate from D-ribulose 5-phosphate: step 2/3. It functions in the pathway bacterial outer membrane biogenesis; lipopolysaccharide biosynthesis. This Shewanella woodyi (strain ATCC 51908 / MS32) protein is 2-dehydro-3-deoxyphosphooctonate aldolase.